Consider the following 1056-residue polypeptide: MTSPWGHSADLARFYTVTEPQRHPRGYTVYKVTARVVSRRNPEDVQEIIVWRRYSDFKKLHRELWQIHRNAFRHSELFPPFAKGTVFGRFDKTVIEERRQCAEDLLQFSANIPALYNSRQLQDFFKGGVISDGSELIGPAEAYPDSPANAFPECGTEGFSSDSDLLSLTVDADSLAEVDDGMASRQGSPSRTFGLSLSTDSSAVGAVASDSEPSRVEDRESRSLFPSSLKPRLGRRDYLEKAGELIKLALKKEEEDDYEAASDFYRKGVDLLLEGVQGESSPTRREAVKRRTAEYLMRAESICSLRAAPQLHTGPQPPGSLSSRPPWSLRSPAEELKAFRVLGVIDKVLLVMDTRTEQTFILKGLRKSSECSRNRKTIIPRCVPNMVCLHTYIISEESVFLVLQRAEGGKLWSYISKFLNRSSQESLDIKEGRPSMPPRVCLQQPSASPQGGSSFESRGSDTGSMLKALPLKTSLTPSSQDDSNQEDDGQPSSPKWLDSGSSSEDECTAGYLTLCNEYGQEKMDLVSLSEESVMQPEGDKADTQAVSSPASLATGSVSPSTHLRVFSGGEDLEAVSSPPTSESLSRSKNSPMEFFRIDSKDSTSELLGLDFGEKLHSLKPEPLKALFTLEDGDSPSQSLDPGESKRESEAQDSVSRGSDDSVPVISFKEAAAEAISGAEEGRPDLLVNLPGELQPTKEASAMDPKFSQASAGRLDSKLLEAPDVLCLRLSSEQCHGLGPEGPEELSDPTEFCPGGVIPEHDAQADPGVLFEAAVDHRSSPDQFLFSSLRSESDRLGQVEVVVTAQALQESLFHISSPCSGANKEHSAYADTATSEEVLLFTEPTKEEANSLFQRGSEAQERGVGAGEADKEIHQIFEDLDKRLAASSRFFIPEGCIQRWAAEMVVALDALHREGIVCRDLNPNNILLNDGGHIQLTYFSRWSEVEDSCDSDAVARMYCAPEVGAVTEETEACDWWSLGAVLFELLTGKTLVECHPAGINTHTTLNMPGCVSEEARSLIQQLLQFNPMERLGAGVAGVEDIKSHPFFTPVDWAELTR.

Residues 8 to 132 form the PX domain; it reads SADLARFYTV…DFFKGGVISD (125 aa). Positions 204–223 are disordered; it reads VGAVASDSEPSRVEDRESRS. Residues 212-222 are compositionally biased toward basic and acidic residues; the sequence is EPSRVEDRESR. An MIT domain is found at 276–304; that stretch reads VQGESSPTRREAVKRRTAEYLMRAESICS. Residues Ser281, Ser422, Ser423, Ser426, Ser446, Ser448, and Ser454 each carry the phosphoserine modification. The 102-residue stretch at 343–444 folds into the Protein kinase 1 domain; it reads GVIDKVLLVM…SMPPRVCLQQ (102 aa). The tract at residues 426–504 is disordered; sequence SLDIKEGRPS…KWLDSGSSSE (79 aa). Positions 443–454 are enriched in low complexity; sequence QQPSASPQGGSS. Positions 473-482 are enriched in polar residues; sequence TSLTPSSQDD. Phosphoserine occurs at positions 493 and 527. A disordered region spans residues 529 to 588; sequence SEESVMQPEGDKADTQAVSSPASLATGSVSPSTHLRVFSGGEDLEAVSSPPTSESLSRSK. The segment covering 544 to 561 has biased composition (polar residues); it reads QAVSSPASLATGSVSPST. Residues 576–587 show a composition bias toward low complexity; the sequence is SSPPTSESLSRS. A phosphoserine mark is found at Ser577, Ser599, Ser602, Ser634, Ser655, Ser658, Ser661, and Ser787. The tract at residues 628–662 is disordered; the sequence is TLEDGDSPSQSLDPGESKRESEAQDSVSRGSDDSV. The Protein kinase 2 domain maps to 789-1046; sequence RSESDRLGQV…VEDIKSHPFF (258 aa). Residues 795-803 and Lys823 each bind ATP; that span reads LGQVEVVVT. The Proton acceptor role is filled by Asp919.

Belongs to the protein kinase superfamily. Ser/Thr protein kinase family. S6 kinase subfamily. As to quaternary structure, interacts with SPHK1 and phosphatidylinositol 3-phosphate. Interacts (via PX domain) with PRDX3.

Its subcellular location is the cytoplasm. The protein resides in the membrane. It is found in the early endosome. It carries out the reaction L-seryl-[protein] + ATP = O-phospho-L-seryl-[protein] + ADP + H(+). It catalyses the reaction L-threonyl-[protein] + ATP = O-phospho-L-threonyl-[protein] + ADP + H(+). Its function is as follows. May be involved in transmitting sphingosine-1 phosphate (SPP)-mediated signaling into the cell. Plays a role in the recruitment of PRDX3 to early endosomes. This Mus musculus (Mouse) protein is Ribosomal protein S6 kinase delta-1 (Rps6kc1).